The following is a 297-amino-acid chain: Molybdate/tungstate import ATP-binding protein WtpC (297 aa).

The 225-residue stretch at 2–226 (LKVNNLSKIW…PKNKKVAEFL (225 aa)) folds into the ABC transporter domain. Residue 32 to 39 (GPSGAGKS) coordinates ATP.

The protein belongs to the ABC transporter superfamily. Sulfate/tungstate importer (TC 3.A.1.6) family. As to quaternary structure, the complex is composed of two ATP-binding proteins (WtpC), two transmembrane proteins (WtpB) and a solute-binding protein (WtpA).

The protein resides in the cell membrane. The enzyme catalyses tungstate(in) + ATP + H2O = tungstate(out) + ADP + phosphate + H(+). Functionally, part of the ABC transporter complex WtpABC involved in molybdate/tungstate import. Responsible for energy coupling to the transport system. The polypeptide is Molybdate/tungstate import ATP-binding protein WtpC (wtpC) (Methanocaldococcus jannaschii (strain ATCC 43067 / DSM 2661 / JAL-1 / JCM 10045 / NBRC 100440) (Methanococcus jannaschii)).